The chain runs to 1136 residues: Receptor-type guanylate cyclase gcy-4 (1136 aa).

The signal sequence occupies residues 1 to 21 (MRQLNYYIFISTILTYNLTHG). Residues 22–485 (QGPRPVIRVG…CPLPIFEQYR (464 aa)) lie on the Extracellular side of the membrane. 7 N-linked (GlcNAc...) asparagine glycosylation sites follow: N40, N194, N252, N351, N377, N386, and N438. The helical transmembrane segment at 486-506 (ALVIVAIAVTILILLAIIICM) threads the bilayer. Over 507-1136 (SSKIRNRRVE…LRREMMRVEV (630 aa)) the chain is Cytoplasmic. Residues 533–833 (LPMHRRASKS…EDNLMDHVFS (301 aa)) enclose the Protein kinase domain. The segment at 536-565 (HRRASKSSQESETESASETENFTSKSGDTM) is disordered. A Guanylate cyclase domain is found at 891 to 1021 (TVFFSDLVKF…DTVNTASRME (131 aa)).

This sequence belongs to the adenylyl cyclase class-4/guanylyl cyclase family. In terms of tissue distribution, expression is biased toward ASE right (ASER) sensory neuron.

The protein localises to the cell membrane. The catalysed reaction is GTP = 3',5'-cyclic GMP + diphosphate. In terms of biological role, guanylate cyclase involved in the production of the second messenger cGMP. Regulates chemotaxis responses toward Br(1-) and I(1-) salt ions in ASE right (ASER) sensory neuron. This is Receptor-type guanylate cyclase gcy-4 from Caenorhabditis elegans.